Here is a 422-residue protein sequence, read N- to C-terminus: UDP-N-acetylglucosamine 1-carboxyvinyltransferase (422 aa).

Residue 22 to 23 (KN) participates in phosphoenolpyruvate binding. Arg93 serves as a coordination point for UDP-N-acetyl-alpha-D-glucosamine. Cys117 acts as the Proton donor in catalysis. The residue at position 117 (Cys117) is a 2-(S-cysteinyl)pyruvic acid O-phosphothioketal. UDP-N-acetyl-alpha-D-glucosamine contacts are provided by residues 122 to 126 (RPVDL), Asp308, and Leu330.

The protein belongs to the EPSP synthase family. MurA subfamily.

It is found in the cytoplasm. It carries out the reaction phosphoenolpyruvate + UDP-N-acetyl-alpha-D-glucosamine = UDP-N-acetyl-3-O-(1-carboxyvinyl)-alpha-D-glucosamine + phosphate. The protein operates within cell wall biogenesis; peptidoglycan biosynthesis. Functionally, cell wall formation. Adds enolpyruvyl to UDP-N-acetylglucosamine. This chain is UDP-N-acetylglucosamine 1-carboxyvinyltransferase, found in Helicobacter acinonychis (strain Sheeba).